The following is a 373-amino-acid chain: NADPH-dependent 3-keto-steroid reductase HSD3B3 (373 aa).

NADP(+) is bound by residues 10-15 (GAGGFL), tyrosine 155, and lysine 159. Lysine 159 acts as the Proton donor in catalysis. A helical membrane pass occupies residues 288-308 (VALLYWFGFLLETVSFLLRPV).

It belongs to the 3-beta-HSD family. In terms of tissue distribution, high levels in adrenal gland, kidney and male liver (at protein level). Low levels in female liver (at protein level). Expressed in ovaries (at protein level).

Its subcellular location is the endoplasmic reticulum membrane. It localises to the mitochondrion membrane. The catalysed reaction is a 3beta-hydroxysteroid + NADP(+) = a 3-oxosteroid + NADPH + H(+). The enzyme catalyses 5alpha-androstane-3beta,17beta-diol + NADP(+) = 17beta-hydroxy-5alpha-androstan-3-one + NADPH + H(+). Its pathway is steroid metabolism. In terms of biological role, responsible for the reduction of the oxo group on the C-3 of 5alpha-androstane steroids. Catalyzes the conversion of dihydrotestosterone to its inactive form 5alpha-androstanediol, that does not bind androgen receptor/AR. Does not function as an isomerase. This Mesocricetus auratus (Golden hamster) protein is NADPH-dependent 3-keto-steroid reductase HSD3B3 (HSD3B3).